Reading from the N-terminus, the 72-residue chain is MPKDDSIEVEGTVMEPLPNAMFRVVLDNGHKVLAHISGKMRMHFIRILPGDKVKVELSPYDLTRGRITYRAK.

The 72-residue stretch at 1 to 72 (MPKDDSIEVE…TRGRITYRAK (72 aa)) folds into the S1-like domain.

The protein belongs to the IF-1 family. As to quaternary structure, component of the 30S ribosomal translation pre-initiation complex which assembles on the 30S ribosome in the order IF-2 and IF-3, IF-1 and N-formylmethionyl-tRNA(fMet); mRNA recruitment can occur at any time during PIC assembly.

Its subcellular location is the cytoplasm. Functionally, one of the essential components for the initiation of protein synthesis. Stabilizes the binding of IF-2 and IF-3 on the 30S subunit to which N-formylmethionyl-tRNA(fMet) subsequently binds. Helps modulate mRNA selection, yielding the 30S pre-initiation complex (PIC). Upon addition of the 50S ribosomal subunit IF-1, IF-2 and IF-3 are released leaving the mature 70S translation initiation complex. The chain is Translation initiation factor IF-1 from Myxococcus xanthus (strain DK1622).